The primary structure comprises 104 residues: Phosphoribosyl-ATP pyrophosphatase (104 aa).

It belongs to the PRA-PH family.

The protein resides in the cytoplasm. The catalysed reaction is 1-(5-phospho-beta-D-ribosyl)-ATP + H2O = 1-(5-phospho-beta-D-ribosyl)-5'-AMP + diphosphate + H(+). The protein operates within amino-acid biosynthesis; L-histidine biosynthesis; L-histidine from 5-phospho-alpha-D-ribose 1-diphosphate: step 2/9. The protein is Phosphoribosyl-ATP pyrophosphatase of Streptococcus gordonii (strain Challis / ATCC 35105 / BCRC 15272 / CH1 / DL1 / V288).